The sequence spans 340 residues: Ferredoxin--NADP reductase (340 aa).

FAD is bound by residues D33, Q41, Y46, A86, F120, D286, and T327.

Belongs to the ferredoxin--NADP reductase type 2 family. As to quaternary structure, homodimer. FAD serves as cofactor.

The enzyme catalyses 2 reduced [2Fe-2S]-[ferredoxin] + NADP(+) + H(+) = 2 oxidized [2Fe-2S]-[ferredoxin] + NADPH. The chain is Ferredoxin--NADP reductase from Rickettsia rickettsii (strain Sheila Smith).